The following is a 476-amino-acid chain: PRAME family member 5 (476 aa).

The stretch at 97 to 124 (RWKLQVLDLQDVCENFWMVWSEAMAHGC) is one LRR 1; degenerate repeat. The stretch at 179-203 (HLCCKKLKILGMPFRNIRSILKMVN) is one LRR 2; degenerate repeat. Residues 204 to 230 (LDCIQEVEVNCKWVLPILTQFTPYLGH) form an LRR 3; degenerate repeat. An LRR 4; degenerate repeat occupies 231–266 (MRNLQKLVLSHMDVSRYVSPEQKKEIVTQFTTQFLK). LRR repeat units lie at residues 267-292 (LCCL…LSCL), 293-324 (KTSL…SQLK), 325-345 (TLDL…QILL), 349-376 (AATL…ALSR), and 377-401 (CFEL…LLSH).

It belongs to the PRAME family.

The chain is PRAME family member 5 from Homo sapiens (Human).